A 113-amino-acid chain; its full sequence is Protein USP2 (113 aa).

The signal sequence occupies residues 1–18; that stretch reads MKITMFFAALSAASGVFA. Tandem repeats lie at residues 32–37, 40–45, 46–49, 50–53, 59–65, and 69–75. The segment at 32–45 is 2 X 6 AA repeats; the sequence is IGAGVGIGIGAGVG. The interval 46–53 is 2 X 4 AA approximate tandem repeats; that stretch reads SYGYPYGA. The interval 59-75 is 2 X 7 AA approximate repeats; the sequence is LQLLPLRWLPLRRLPLR.

The protein resides in the secreted. The chain is Protein USP2 (USP2) from Puccinia graminis (Black stem rust fungus).